A 486-amino-acid polypeptide reads, in one-letter code: Monocarboxylate transporter 12 (486 aa).

Residues Met1 to Ser9 lie on the Cytoplasmic side of the membrane. The next 6 membrane-spanning stretches (helical) occupy residues Ala10–Ile30, Ala58–Val78, Ala86–Thr106, Leu115–Gly135, Ile148–Ile168, and Leu177–Ile197. The segment covering Glu201–Lys220 has biased composition (basic and acidic residues). Residues Glu201 to Gln221 form a disordered region. Transmembrane regions (helical) follow at residues Phe253–Tyr273, Ala289–Leu309, Tyr320–Leu340, Phe353–Gly373, Val383–Val403, and Thr410–Ala430. The Cytoplasmic portion of the chain corresponds to Lys431 to Thr486.

Belongs to the major facilitator superfamily. Monocarboxylate porter (TC 2.A.1.13) family. As to quaternary structure, interacts with isoform 2 of BSG; this interaction is required for its localization to the plasma membrane. Detected in kidney, choroid plexus, testis, lung, stomach, large and small intestine, spleen, fat and parotid gland. In eye, expressed in cornea, ciliary epithelium, lens epithelium and lens fiber.

The protein localises to the cell membrane. The protein resides in the basolateral cell membrane. The enzyme catalyses creatine(in) = creatine(out). It catalyses the reaction guanidinoacetate(in) = guanidinoacetate(out). Creatine uptake is inhibited by carbonyl cyanide 3-chlorophenylhydrazone (CCCP) and by valinomycin. Functionally, functions as a transporter for creatine and as well for its precursor guanidinoacetate. Transport of creatine and GAA is independent of resting membrane potential and extracellular Na(+), Cl(-), or pH. Contributes to the process of creatine biosynthesis and distribution. This Rattus norvegicus (Rat) protein is Monocarboxylate transporter 12.